A 161-amino-acid chain; its full sequence is RNA pyrophosphohydrolase (161 aa).

In terms of domain architecture, Nudix hydrolase spans 12-154 (PYRPGVGMMI…KRKLYQAVVK (143 aa)). The Nudix box motif lies at 46–67 (GGIVPGETPSIAAMREMLEEIG).

Belongs to the Nudix hydrolase family. RppH subfamily. It depends on a divalent metal cation as a cofactor.

In terms of biological role, accelerates the degradation of transcripts by removing pyrophosphate from the 5'-end of triphosphorylated RNA, leading to a more labile monophosphorylated state that can stimulate subsequent ribonuclease cleavage. The polypeptide is RNA pyrophosphohydrolase (Rickettsia rickettsii (strain Iowa)).